The following is an 81-amino-acid chain: Small ribosomal subunit protein uS17 (81 aa).

It belongs to the universal ribosomal protein uS17 family. As to quaternary structure, part of the 30S ribosomal subunit.

Its function is as follows. One of the primary rRNA binding proteins, it binds specifically to the 5'-end of 16S ribosomal RNA. In Trichormus variabilis (strain ATCC 29413 / PCC 7937) (Anabaena variabilis), this protein is Small ribosomal subunit protein uS17.